Consider the following 373-residue polypeptide: MRVGKLCRLALRFWMGLILVLGFSSHYYNPTRRRLVYSRILQTYDWLLMVINLGAFYLYYRYAMTYFLEGMFRRQGFVNQVSTCNVFQQLLMAVTGTWLHFLFERHVCQTYNELSRILKHDLKLKEHSRFYCLAFLAKVYNFFHNFNFALSAIMHWGLRPFNVWDLLANLYFVYNSLARDAILVAYVLLLLNLSEALRLNGQQEHDTYSDLMKQLRRRERLLRIGRRVHRMFAWLVAIALIYLVFFNTATIYLGYTMFIQKHDALGLRGRGLKMLLTVVSFLVILWDVVLLQVICEKLLAEENKICDCPEDVASSRTTYRQWEMSALRRAITRSSPENNVLGMFRMDMRCAFALISCSLSYGIIIIQIGYIPG.

The Cytoplasmic segment spans residues 1 to 8 (MRVGKLCR). The helical transmembrane segment at 9–29 (LALRFWMGLILVLGFSSHYYN) threads the bilayer. Over 30–82 (PTRRRLVYSRILQTYDWLLMVINLGAFYLYYRYAMTYFLEGMFRRQGFVNQVS) the chain is Extracellular. A helical membrane pass occupies residues 83 to 103 (TCNVFQQLLMAVTGTWLHFLF). Topologically, residues 104–132 (ERHVCQTYNELSRILKHDLKLKEHSRFYC) are cytoplasmic. A helical transmembrane segment spans residues 133–153 (LAFLAKVYNFFHNFNFALSAI). Residues 154-170 (MHWGLRPFNVWDLLANL) lie on the Extracellular side of the membrane. The helical transmembrane segment at 171-191 (YFVYNSLARDAILVAYVLLLL) threads the bilayer. Topologically, residues 192–230 (NLSEALRLNGQQEHDTYSDLMKQLRRRERLLRIGRRVHR) are cytoplasmic. Residues 231 to 251 (MFAWLVAIALIYLVFFNTATI) form a helical membrane-spanning segment. Residues 252 to 273 (YLGYTMFIQKHDALGLRGRGLK) lie on the Extracellular side of the membrane. The helical transmembrane segment at 274–294 (MLLTVVSFLVILWDVVLLQVI) threads the bilayer. Residues 295-350 (CEKLLAEENKICDCPEDVASSRTTYRQWEMSALRRAITRSSPENNVLGMFRMDMRC) are Cytoplasmic-facing. The helical transmembrane segment at 351 to 371 (AFALISCSLSYGIIIIQIGYI) threads the bilayer. The Extracellular segment spans residues 372–373 (PG).

Belongs to the insect chemoreceptor superfamily. Gustatory receptor (GR) family. Gr10a subfamily.

Its subcellular location is the cell membrane. Probable gustatory receptor which mediates acceptance or avoidance behavior, depending on its substrates. The sequence is that of Putative gustatory receptor 10b (Gr10b) from Drosophila melanogaster (Fruit fly).